Reading from the N-terminus, the 2426-residue chain is MATNIEQIFRSFVVSKFREIQQELSSGRNEGQLNGETNTPIEGNQAGDAAASARSLPNEEIVQKIEEVLSGVLDTELRYKPDLKEGSRKSRCVSVQTDPTDEIPTKKSKKHKKHKNKKKKKKKEKEKKYKRQPEESESKTKSHDDGNIDLESDSFLKFDSEPSAVALELPTRAFGPSETNESPAVVLEPPVVSMEVSEPHILETLKPATKTAELSVVSTSVISEQSEQSVAVMPEPSMTKILDSFAAAPVPTTTLVLKSSEPVVTMSVEYQMKSVLKSVESTSPEPSKIMLVEPPVAKVLEPSETLVVSSETPTEVYPEPSTSTTMDFPESSAIEALRLPEQPVDVPSEIADSSMTRPQELPELPKTTALELQESSVASAMELPGPPATSMPELQGPPVTPVLELPGPSATPVPELPGPLSTPVPELPGPPATAVPELPGPSVTPVPQLSQELPGLPAPSMGLEPPQEVPEPPVMAQELPGLPLVTAAVELPEQPAVTVAMELTEQPVTTTELEQPVGMTTVEHPGHPEVTTATGLLGQPEATMVLELPGQPVATTALELPGQPSVTGVPELPGLPSATRALELSGQPVATGALELPGPLMAAGALEFSGQSGAAGALELLGQPLATGVLELPGQPGAPELPGQPVATVALEISVQSVVTTSELSTMTVSQSLEVPSTTALESYNTVAQELPTTLVGETSVTVGVDPLMAPESHILASNTMETHILASNTMDSQMLASNTMDSQMLASNTMDSQMLASSTMDSQMLATSSMDSQMLATSSMDSQMLATSTMDSQMLATSSMDSQMLATSSMDSQMLATSSMDSQMLATSSMDSQMLATSTMDSQMLATSTMDSQMLATSSMDSQMLASGTMDSQMLASGTMDAQMLASGTMDAQMLASSTQDSAMLGSKSPDPYRLAQDPYRLAQDPYRLGHDPYRLGHDAYRLGQDPYRLGHDPYRLTPDPYRMSPRPYRIAPRSYRIAPRPYRLAPRPLMLASRRSMMMSYAAERSMMSSYERSMMSYERSMMSPMAERSMMSAYERSMMSAYERSMMSPMAERSMMSAYERSMMSAYERSMMSPMADRSMMSMGADRSMMSSYSAADRSMMSSYSAADRSMMSSYTADRSMMSMAADSYTDSYTDTYTEAYMVPPLPPEEPPTMPPLPPEEPPMTPPLPPEEPPEGPALPTEQSALTAENTWPTEVPSSPSEESVSQPEPPVSQSEISEPSAVPTDYSVSASDPSVLVSEAAVTVPEPPPEPESSITLTPVESAVVAEEHEVVPERPVTCMVSETPAMSAEPTVLASEPPVMSETAETFDSMRASGHVASEVSTSLLVPAVTTPVLAESILEPPAMAAPESSAMAVLESSAVTVLESSTVTVLESSTVTVLEPSVVTVPEPPVVAEPDYVTIPVPVVSALEPSVPVLEPAVSVLQPSMIVSEPSVSVQESTVTVSEPAVTVSEQTQVIPTEVAIESTPMILESSIMSSHVMKGINLSSGDQNLAPEIGMQEIALHSGEEPHAEEHLKGDFYESEHGINIDLNINNHLIAKEMEHNTVCAAGTSPVGEIGEEKILPTSETKQRTVLDTYPGVSEADAGETLSSTGPFALEPDATGTSKGIEFTTASTLSLVNKYDVDLSLTTQDTEHDMVISTSPSGGSEADIEGPLPAKDIHLDLPSNNNLVSKDTEEPLPVKESDQTLAALLSPKESSGGEKEVPPPPKETLPDSGFSANIEDINEADLVRPLLPKDMERLTSLRAGIEGPLLASDVGRDRSAASPVVSSMPERASESSSEEKDDYEIFVKVKDTHEKSKKNKNRDKGEKEKKRDSSLRSRSKRSKSSEHKSRKRTSESRSRARKRSSKSKSHRSQTRSRSRSRRRRRSSRSRSKSRGRRSVSKEKRKRSPKHRSKSRERKRKRSSSRDNRKTVRARSRTPSRRSRSHTPSRRRRSRSVGRRRSFSISPSRRSRTPSRRSRTPSRRSRTPSRRSRTPSRRSRTPSRRSRTPSRRRRSRSVVRRRSFSISPVRLRRSRTPLRRRFSRSPIRRKRSRSSERGRSPKRLTDLDKAQLLEIAKANAAAMCAKAGVPLPPNLKPAPPPTIEEKVAKKSGGATIEELTEKCKQIAQSKEDDDVIVNKPHVSDEEEEEPPFYHHPFKLSEPKPIFFNLNIAAAKPTPPKSQVTLTKEFPVSSGSQHRKKEADSVYGEWVPVEKNGEENKDDDNVFSSNLPSEPVDISTAMSERALAQKRLSENAFDLEAMSMLNRAQERIDAWAQLNSIPGQFTGSTGVQVLTQEQLANTGAQAWIKKDQFLRAAPVTGGMGAVLMRKMGWREGEGLGKNKEGNKEPILVDFKTDRKGLVAVGERAQKRSGNFSAAMKDLSGKHPVSALMEICNKRRWQPPEFLLVHDSGPDHRKHFLFRVLRNGALTRPNCMFFLNRY.

A2 is modified (N-acetylalanine). K16 carries the N6-acetyllysine modification. Over residues L24–E42 the composition is skewed to polar residues. The disordered stretch occupies residues L24 to L56. Residue K64 forms a Glycyl lysine isopeptide (Lys-Gly) (interchain with G-Cter in SUMO2) linkage. Residues L77–R88 are compositionally biased toward basic and acidic residues. Residues L77–F155 are disordered. Position 94 is a phosphoserine (S94). Positions K106 to K130 are enriched in basic residues. Positions R131–G146 are enriched in basic and acidic residues. Phosphoserine is present on residues S142, S152, S154, S160, and S283. K288 carries the post-translational modification N6-acetyllysine. A disordered region spans residues T305–F328. T400 is modified (phosphothreonine). Positions P406–S442 are disordered. The segment covering S409–S442 has biased composition (pro residues). The tract at residues L726–M895 is 17 X 10 AA tandem repeats of L-A-[ST]-[NSG]-[TS]-MDSQM. Positions D912–P988 are 11 X 7 AA tandem repeats of [DR]-P-Y-R-[LI][AG][QHP]. R950 is modified (omega-N-methylarginine). T959 carries the post-translational modification Phosphothreonine. Position 998 is a phosphoserine (S998). Repeat copies occupy residues E1006–S1011, E1014–S1019, E1021–S1026, E1030–S1035, E1038–S1043, E1046–S1051, E1055–S1060, E1063–S1068, E1071–S1076, D1080–S1085, D1089–S1094, D1100–S1105, D1111–S1116, and D1121–S1126. The segment at E1006–S1126 is 14 X 6 AA repeats of [ED]-R-S-M-M-S. Asymmetric dimethylarginine is present on R1007. At R1022 the chain carries Asymmetric dimethylarginine. Residues S1035 and S1043 each carry the phosphoserine modification. 2 positions are modified to phosphoserine: S1060 and S1068. A Phosphoserine modification is found at S1082. The disordered stretch occupies residues Y1144–D1236. The interval P1147 to G1179 is 3 X 11 AA tandem repats of P-P-L-P-P-E-E-P-P-[TME]-[MTG]. Pro residues predominate over residues P1147 to P1180. Positions Q1186–P1196 are enriched in polar residues. The segment covering E1198 to S1224 has biased composition (low complexity). Residues V1359–T1390 are 4 X 8 AA tandem repeats of V-L-E-SS-[AVT]-VT. Phosphoserine occurs at positions 1556 and 1651. Residues T1645–S1722 are disordered. Basic and acidic residues predominate over residues K1677–D1689. Phosphoserine occurs at positions 1697, 1701, 1747, 1759, 1766, 1769, 1782, and 1783. The interval G1754–D2054 is disordered. Composition is skewed to basic and acidic residues over residues Y1790 to E1801, R1809 to L1822, and K1830 to S1845. Composition is skewed to basic residues over residues R1846–S1909 and T1917–S1948. A run of 9 repeats spans residues P1925–S1931, P1934–S1952, P1953–T1959, P1960–T1966, P1967–T1973, P1974–T1980, P1981–T1987, P1988–T1994, and P1995–S2013. A 7 X 7 AA repeats of P-S-R-R-S-R-[TS] region spans residues P1925 to T1994. Positions P1934–S2013 are 2 X 19 AA repeats of P-S-R-R-R-R-S-R-S-V-V-R-R-R-S-F-S-I-S. 3 positions are modified to phosphoserine: S1948, S1950, and S1952. Positions R1955–S2009 are enriched in basic residues. Phosphoserine occurs at positions 2009, 2011, 2013, 2029, and 2031. Residues S2013 to R2039 are 3 X tandem repeats of [ST]-P-[VLI]-R-[RL]-[RK]-[RF]-S-R. Over residues R2016–S2038 the composition is skewed to basic residues. The span at R2039–D2054 shows a compositional bias: basic and acidic residues. An N6-acetyllysine; alternate modification is found at K2055. K2055 participates in a covalent cross-link: Glycyl lysine isopeptide (Lys-Gly) (interchain with G-Cter in SUMO2); alternate. Residue K2092 forms a Glycyl lysine isopeptide (Lys-Gly) (interchain with G-Cter in SUMO2) linkage. A Phosphoserine modification is found at S2129. K2149 is covalently cross-linked (Glycyl lysine isopeptide (Lys-Gly) (interchain with G-Cter in SUMO2)). The residue at position 2163 (T2163) is a Phosphothreonine. The tract at residues K2200 to P2220 is disordered. S2238 is modified (phosphoserine). One can recognise a G-patch domain in the interval T2305–E2351. A DRBM domain is found at H2371–Y2426.

In terms of assembly, interacts with SRSF2. Associates with the spliceosome. Interacts with the AML1-MTG8 (AML1-ETO) fusion protein, possibly leading to trigger signals inhibiting leukemogenesis. Interacts with USH1G. In terms of tissue distribution, widely expressed, with the higher expression seen in leukocyte and heart.

It localises to the nucleus speckle. RNA-binding protein that acts as a mRNA splicing cofactor by promoting efficient splicing of transcripts that possess weak splice sites. Specifically promotes splicing of many cell-cycle and DNA-repair transcripts that possess weak splice sites, such as TUBG1, KATNB1, TUBGCP2, AURKB, PCNT, AKT1, RAD23A, and FANCG. Probably acts by facilitating the interaction between Serine/arginine-rich proteins such as SRSF2 and the RNA polymerase II. Also binds to DNA; binds to the consensus DNA sequence: 5'-GA[GT]AN[CG][AG]CC-3'. May indirectly repress hepatitis B virus (HBV) core promoter activity and transcription of HBV genes and production of HBV virions. Essential for correct RNA splicing of multiple genes critical for brain development, neuronal migration and metabolism, including TUBG1, FLNA, PNKP, WDR62, PSMD3, PCK2, PFKL, IDH2, and ACY1. The protein is Protein SON (SON) of Homo sapiens (Human).